A 426-amino-acid polypeptide reads, in one-letter code: Protein FAM124B (426 aa).

The protein belongs to the FAM124 family.

It localises to the nucleus. The polypeptide is Protein FAM124B (fam124b) (Xenopus tropicalis (Western clawed frog)).